Consider the following 301-residue polypeptide: Methionyl-tRNA formyltransferase (301 aa).

109–112 (SLLP) is a binding site for (6S)-5,6,7,8-tetrahydrofolate.

This sequence belongs to the Fmt family.

It catalyses the reaction L-methionyl-tRNA(fMet) + (6R)-10-formyltetrahydrofolate = N-formyl-L-methionyl-tRNA(fMet) + (6S)-5,6,7,8-tetrahydrofolate + H(+). Attaches a formyl group to the free amino group of methionyl-tRNA(fMet). The formyl group appears to play a dual role in the initiator identity of N-formylmethionyl-tRNA by promoting its recognition by IF2 and preventing the misappropriation of this tRNA by the elongation apparatus. This chain is Methionyl-tRNA formyltransferase, found in Novosphingobium aromaticivorans (strain ATCC 700278 / DSM 12444 / CCUG 56034 / CIP 105152 / NBRC 16084 / F199).